We begin with the raw amino-acid sequence, 98 residues long: Citrate lyase acyl carrier protein (98 aa).

O-(phosphoribosyl dephospho-coenzyme A)serine is present on Ser14.

The protein belongs to the CitD family. Oligomer with a subunit composition of (alpha,beta,gamma)6.

Its subcellular location is the cytoplasm. In terms of biological role, covalent carrier of the coenzyme of citrate lyase. The polypeptide is Citrate lyase acyl carrier protein (Vibrio cholerae serotype O1 (strain ATCC 39315 / El Tor Inaba N16961)).